The sequence spans 160 residues: Protein-export protein SecB (160 aa).

It belongs to the SecB family. As to quaternary structure, homotetramer, a dimer of dimers. One homotetramer interacts with 1 SecA dimer.

It is found in the cytoplasm. Functionally, one of the proteins required for the normal export of preproteins out of the cell cytoplasm. It is a molecular chaperone that binds to a subset of precursor proteins, maintaining them in a translocation-competent state. It also specifically binds to its receptor SecA. In Rhizobium johnstonii (strain DSM 114642 / LMG 32736 / 3841) (Rhizobium leguminosarum bv. viciae), this protein is Protein-export protein SecB.